Reading from the N-terminus, the 301-residue chain is tRNA (guanine-N(7)-)-methyltransferase (301 aa).

Residues 1 to 26 (MSETPDSPRPVTPGSQASFGTYGGRP) are disordered. 4 residues coordinate S-adenosyl-L-methionine: Glu85, Glu110, Asn137, and Asp160. Asp160 is an active-site residue. Substrate-binding residues include Lys164 and Asp196. A disordered region spans residues 244–270 (APVREGRAPVSTEHTGPNEGVDEEGGW). 280-283 (TSFE) serves as a coordination point for substrate.

It belongs to the class I-like SAM-binding methyltransferase superfamily. TrmB family.

The enzyme catalyses guanosine(46) in tRNA + S-adenosyl-L-methionine = N(7)-methylguanosine(46) in tRNA + S-adenosyl-L-homocysteine. Its pathway is tRNA modification; N(7)-methylguanine-tRNA biosynthesis. In terms of biological role, catalyzes the formation of N(7)-methylguanine at position 46 (m7G46) in tRNA. The polypeptide is tRNA (guanine-N(7)-)-methyltransferase (Paenarthrobacter aurescens (strain TC1)).